Consider the following 152-residue polypeptide: Lipoprotein signal peptidase (152 aa).

Helical transmembrane passes span valine 33 to leucine 53, methionine 58 to isoleucine 78, and proline 83 to aspartate 102. Residues aspartate 111 and aspartate 125 contribute to the active site. A helical membrane pass occupies residues valine 120–leucine 140.

It belongs to the peptidase A8 family.

The protein resides in the cell membrane. It carries out the reaction Release of signal peptides from bacterial membrane prolipoproteins. Hydrolyzes -Xaa-Yaa-Zaa-|-(S,diacylglyceryl)Cys-, in which Xaa is hydrophobic (preferably Leu), and Yaa (Ala or Ser) and Zaa (Gly or Ala) have small, neutral side chains.. It participates in protein modification; lipoprotein biosynthesis (signal peptide cleavage). Its function is as follows. This protein specifically catalyzes the removal of signal peptides from prolipoproteins. The polypeptide is Lipoprotein signal peptidase (Pelotomaculum thermopropionicum (strain DSM 13744 / JCM 10971 / SI)).